A 434-amino-acid chain; its full sequence is 3-phosphoshikimate 1-carboxyvinyltransferase (434 aa).

3-phosphoshikimate-binding residues include Lys22, Ser23, and Arg27. Lys22 provides a ligand contact to phosphoenolpyruvate. Gly94 and Arg122 together coordinate phosphoenolpyruvate. The 3-phosphoshikimate site is built by Ser167, Gln169, Asp314, and Lys341. Gln169 is a phosphoenolpyruvate binding site. Asp314 functions as the Proton acceptor in the catalytic mechanism. Phosphoenolpyruvate-binding residues include Arg345 and Arg391.

Belongs to the EPSP synthase family. Monomer.

It is found in the cytoplasm. It catalyses the reaction 3-phosphoshikimate + phosphoenolpyruvate = 5-O-(1-carboxyvinyl)-3-phosphoshikimate + phosphate. The protein operates within metabolic intermediate biosynthesis; chorismate biosynthesis; chorismate from D-erythrose 4-phosphate and phosphoenolpyruvate: step 6/7. Functionally, catalyzes the transfer of the enolpyruvyl moiety of phosphoenolpyruvate (PEP) to the 5-hydroxyl of shikimate-3-phosphate (S3P) to produce enolpyruvyl shikimate-3-phosphate and inorganic phosphate. This Leuconostoc mesenteroides subsp. mesenteroides (strain ATCC 8293 / DSM 20343 / BCRC 11652 / CCM 1803 / JCM 6124 / NCDO 523 / NBRC 100496 / NCIMB 8023 / NCTC 12954 / NRRL B-1118 / 37Y) protein is 3-phosphoshikimate 1-carboxyvinyltransferase.